We begin with the raw amino-acid sequence, 318 residues long: L-lactate dehydrogenase (318 aa).

NAD(+) contacts are provided by residues Val-18, Asp-39, Lys-44, Tyr-69, and 83 to 84; that span reads GA. The substrate site is built by Gln-86 and Arg-92. NAD(+)-binding positions include Ser-105, 122 to 124, and Ser-147; that span reads VSN. 124 to 127 lines the substrate pocket; sequence NPVD. 152-155 is a substrate binding site; sequence DTSR. His-179 (proton acceptor) is an active-site residue. The residue at position 225 (Tyr-225) is a Phosphotyrosine. Substrate is bound at residue Thr-234.

Belongs to the LDH/MDH superfamily. LDH family. As to quaternary structure, homotetramer.

It localises to the cytoplasm. It catalyses the reaction (S)-lactate + NAD(+) = pyruvate + NADH + H(+). The protein operates within fermentation; pyruvate fermentation to lactate; (S)-lactate from pyruvate: step 1/1. Catalyzes the conversion of lactate to pyruvate. This Clostridium botulinum (strain Kyoto / Type A2) protein is L-lactate dehydrogenase.